The following is a 711-amino-acid chain: Probable cyclic nucleotide-gated ion channel 10 (711 aa).

Topologically, residues 1–81 (MAFSHDNRVR…QDSFLQNWNK (81 aa)) are cytoplasmic. Residues 82–102 (IFLFACVVALAIDPLFFYIPI) traverse the membrane as a helical segment. At 103 to 116 (VDSARHCLTLDSKL) the chain is on the extracellular side. Residues 117 to 137 (EIAASLLRTLIDAFYIIHIVF) traverse the membrane as a helical segment. Residues 138-170 (QFRTAYIAPSSRVFGRGELVDDAKAIALKYLSS) lie on the Cytoplasmic side of the membrane. The chain crosses the membrane as a helical span at residues 171–191 (YFIIDLLSILPLPQIVVLAVI). The Extracellular segment spans residues 192–204 (PSVNQPVSLLTKD). The chain crosses the membrane as a helical span at residues 205–225 (YLKFSIIAQYVPRILRMYPLY). Topologically, residues 226–243 (TEVTRTSGIVTETAWAGA) are cytoplasmic. The helical transmembrane segment at 244–264 (AWNLSLYMLASHVFGALWYLI) threads the bilayer. The Extracellular portion of the chain corresponds to 265-366 (SVEREDRCWQ…GQNLQTSKFV (102 aa)). The chain crosses the membrane as a helical span at residues 367–387 (GEIIFAISICISGLVLFALLI). Over 388–711 (GNMQKYLEST…DFTANHTTDP (324 aa)) the chain is Cytoplasmic. A nucleoside 3',5'-cyclic phosphate-binding positions include 473–603 (LFEI…TFRF) and E544. The interval 589-604 (FRRLHSKQLQHTFRFY) is calmodulin-binding. One can recognise an IQ domain in the interval 609–638 (RTWSVSFIQAAWRRYCRRKLAKSLRDEEDR). The tract at residues 689–711 (YTLPLLPQKPTEPDFTANHTTDP) is disordered.

This sequence belongs to the cyclic nucleotide-gated cation channel (TC 1.A.1.5) family. In terms of assembly, homotetramer or heterotetramer.

It localises to the cell membrane. Probable cyclic nucleotide-gated ion channel. The chain is Probable cyclic nucleotide-gated ion channel 10 (CNGC10) from Arabidopsis thaliana (Mouse-ear cress).